A 307-amino-acid polypeptide reads, in one-letter code: Taste receptor type 2 member 41 (307 aa).

Residues 1–7 (MQAALTA) are Extracellular-facing. A helical transmembrane segment spans residues 8 to 28 (FFMLLFSLLSLLGIAANGFIV). Topologically, residues 29-40 (LVLGREWLRYGR) are cytoplasmic. Residues 41 to 61 (LLPLDMILISLGASRFCLQLV) form a helical membrane-spanning segment. The Extracellular segment spans residues 62–88 (GTVHNFYYSAQKVEYSGGLGRQFFHLH). A helical membrane pass occupies residues 89–109 (WHFLNSATFWFCSWLSVLFCV). At 110–129 (KIANITHPTFLWLKWRFPGW) the chain is on the cytoplasmic side. The helical transmembrane segment at 130–150 (VPWLLLGSVLISFIITLLFFW) threads the bilayer. Over 151-183 (VNYPAYQEFLIRKFSVNMTYKWNTRIETYYFPS) the chain is Extracellular. N167 is a glycosylation site (N-linked (GlcNAc...) asparagine). A helical membrane pass occupies residues 184 to 204 (LKLVIWSIPFSVFLVSIMLLI). At 205–234 (NSLRRHTQRMQHNGHSLQDPSTQAHTRALK) the chain is on the cytoplasmic side. A helical transmembrane segment spans residues 235–255 (SLISFLILYALSFLSLIIDAT). Residues 256–264 (KFISMQNDF) lie on the Extracellular side of the membrane. Residues 265 to 285 (YWPWQIAVYLCISVHPFILIF) traverse the membrane as a helical segment. Topologically, residues 286–307 (SNLKLRSVFSQLLLLARGFWVA) are cytoplasmic.

The protein belongs to the G-protein coupled receptor T2R family.

It localises to the membrane. Its function is as follows. Receptor that may play a role in the perception of bitterness and is gustducin-linked. May play a role in sensing the chemical composition of the gastrointestinal content. The activity of this receptor may stimulate alpha gustducin, mediate PLC-beta-2 activation and lead to the gating of TRPM5. This chain is Taste receptor type 2 member 41 (TAS2R41), found in Pan troglodytes (Chimpanzee).